Here is a 269-residue protein sequence, read N- to C-terminus: Transcription factor MYB7 (269 aa).

2 consecutive HTH myb-type domains span residues 9-61 (KEHM…INYL) and 62-116 (RPDL…KRKL). DNA-binding regions (H-T-H motif) lie at residues 37–61 (WRSL…INYL) and 89–112 (WSLI…NTHI).

In terms of assembly, interacts with SAD2. In terms of tissue distribution, expressed in anthers. Expressed in pollen grains and mature seeds. Expressed in roots and vasculature of leaves.

The protein localises to the nucleus. Transcription factor involved in the negative regulation of flavonol biosynthesis. Represses the early phenylpropanoid genes, phenylalanine ammonia-lyase (PAL), cinnamate 4-hydroxylase (C4H) and 4-coumarate-CoA ligase (4CL), as well as the flavonoid-specific genes, flavonoid 3'-hydroxylase (F3'H) and dihydroflavonol 4-reductase (DFR). Plays a role in seed germination inhibition. Negatively regulates the expression of the abscisic acid (ABA) signaling transcription factor ABI5 in seeds. In Arabidopsis thaliana (Mouse-ear cress), this protein is Transcription factor MYB7.